Here is a 448-residue protein sequence, read N- to C-terminus: Deoxyguanosinetriphosphate triphosphohydrolase-like protein (448 aa).

Positions 1 to 26 (MQINSSWQERFLADPPREKDHRPPFR) are disordered. A compositionally biased stretch (basic and acidic residues) spans 11 to 26 (FLADPPREKDHRPPFR). Positions 59 to 272 (RLTHSLEVAQ…MELADDIAYA (214 aa)) constitute an HD domain.

It belongs to the dGTPase family. Type 2 subfamily.

In Histophilus somni (strain 129Pt) (Haemophilus somnus), this protein is Deoxyguanosinetriphosphate triphosphohydrolase-like protein.